The following is a 548-amino-acid chain: MFS-rype transporter paaT (548 aa).

Over residues 1–10 (MEAPRSDQAH) the composition is skewed to basic and acidic residues. The interval 1–32 (MEAPRSDQAHTDATTPMEAIRTTSLGTNNYGP) is disordered. Over residues 21–30 (RTTSLGTNNY) the composition is skewed to polar residues. N-linked (GlcNAc...) asparagine glycosylation is found at Asn70 and Asn93. Helical transmembrane passes span 100–120 (WYCT…SSVI), 139–159 (LVVI…FAPM), 174–194 (ALAV…TLIV), 197–217 (LIDG…LADL), 224–244 (GVPM…GPLV), 256–276 (WLYW…TFTV), 332–352 (IVLF…MFFV), 370–390 (GLMF…APFV), 411–431 (LIPM…FAWT), 436–456 (LHWM…ILLY), 471–493 (AASA…VLFT), and 505–525 (ASTL…VFYF). A Peroxisomal targeting signal motif is present at residues 258 to 269 (YWIQLILAFVAW).

This sequence belongs to the major facilitator superfamily. DHA1 family. Polyamines/proton antiporter (TC 2.A.1.2.16) subfamily.

The protein resides in the peroxisome membrane. Functionally, MFS-type transporter involved in penicillin production, most likely through the translocation of side-chain precursors (phenylacetic acid and phenoxyacetic acid) from the cytosol to the peroxisomal lumen across the peroxisomal membrane. In Penicillium rubens (strain ATCC 28089 / DSM 1075 / NRRL 1951 / Wisconsin 54-1255) (Penicillium chrysogenum), this protein is MFS-rype transporter paaT.